Consider the following 347-residue polypeptide: Spermatogenesis associated 6-like protein (347 aa).

A disordered region spans residues 115–199; it reads SKSHGQRVQA…ENNLEHCSKK (85 aa). A compositionally biased stretch (polar residues) spans 116–125; sequence KSHGQRVQAT. The segment covering 153-166 has biased composition (basic residues); the sequence is LHLHRPTQRNHGKS. Residues 170–183 are compositionally biased toward basic and acidic residues; the sequence is PGERKPPFVVRHVD. A phosphoserine mark is found at S218 and S221. Residues 234–285 are disordered; it reads ERIVLKSQPPPPVDSSESRKPSLSHQGDASLHTETSVTTSQLSRPPSPLNQP. A compositionally biased stretch (polar residues) spans 254-277; it reads PSLSHQGDASLHTETSVTTSQLSR.

This sequence belongs to the SPATA6 family.

The polypeptide is Spermatogenesis associated 6-like protein (Spata6l) (Mus musculus (Mouse)).